The sequence spans 671 residues: DNA ligase (671 aa).

Residues 34-38, 83-84, and Glu-115 contribute to the NAD(+) site; these read DAEYD and SL. Residue Lys-117 is the N6-AMP-lysine intermediate of the active site. NAD(+) is bound by residues Arg-138, Glu-174, Lys-291, and Lys-315. Zn(2+)-binding residues include Cys-409, Cys-412, Cys-427, and Cys-432. A BRCT domain is found at 589–671; sequence RSGGPLTGKS…LQMIDTLEEA (83 aa).

It belongs to the NAD-dependent DNA ligase family. LigA subfamily. Mg(2+) serves as cofactor. Mn(2+) is required as a cofactor.

The enzyme catalyses NAD(+) + (deoxyribonucleotide)n-3'-hydroxyl + 5'-phospho-(deoxyribonucleotide)m = (deoxyribonucleotide)n+m + AMP + beta-nicotinamide D-nucleotide.. In terms of biological role, DNA ligase that catalyzes the formation of phosphodiester linkages between 5'-phosphoryl and 3'-hydroxyl groups in double-stranded DNA using NAD as a coenzyme and as the energy source for the reaction. It is essential for DNA replication and repair of damaged DNA. This is DNA ligase from Syntrophotalea carbinolica (strain DSM 2380 / NBRC 103641 / GraBd1) (Pelobacter carbinolicus).